The following is a 164-amino-acid chain: Ribosome maturation factor RimM (164 aa).

Residues 90–161 enclose the PRC barrel domain; sequence KGSYFIADLI…TVTIKPLEIW (72 aa).

This sequence belongs to the RimM family. Binds ribosomal protein uS19.

The protein localises to the cytoplasm. Its function is as follows. An accessory protein needed during the final step in the assembly of 30S ribosomal subunit, possibly for assembly of the head region. Essential for efficient processing of 16S rRNA. May be needed both before and after RbfA during the maturation of 16S rRNA. It has affinity for free ribosomal 30S subunits but not for 70S ribosomes. The chain is Ribosome maturation factor RimM from Clostridium botulinum (strain ATCC 19397 / Type A).